Here is a 219-residue protein sequence, read N- to C-terminus: Cytidylate kinase (219 aa).

An ATP-binding site is contributed by 11-19 (GTAGSGKTA).

It belongs to the cytidylate kinase family. Type 1 subfamily.

It localises to the cytoplasm. It carries out the reaction CMP + ATP = CDP + ADP. The enzyme catalyses dCMP + ATP = dCDP + ADP. In Mesoplasma florum (strain ATCC 33453 / NBRC 100688 / NCTC 11704 / L1) (Acholeplasma florum), this protein is Cytidylate kinase.